We begin with the raw amino-acid sequence, 73 residues long: Beta-defensin 50 (73 aa).

The first 23 residues, 1–23 (MKTLCFLLLTSGLLYLMVKGVGS), serve as a signal peptide directing secretion. Intrachain disulfides connect cysteine 34–cysteine 63 and cysteine 46–cysteine 64.

The protein belongs to the beta-defensin family. In terms of tissue distribution, highly expressed in prostate. Not expressed in uterus, epididymis, ovary, testis, spleen, submaxillary gland, thymus, thyroid, pancreas, smooth muscle, skeletal muscle, heart, kidney, lung, liver, eye and brain.

Its subcellular location is the secreted. Its function is as follows. Has bactericidal activity. The sequence is that of Beta-defensin 50 (Defb50) from Mus musculus (Mouse).